The chain runs to 89 residues: Ixosin-B (89 aa).

Positions 1-26 are cleaved as a signal peptide; it reads MASGWTHRLLLLAAVVTLGATPIAAA. The propeptide occupies 27–57; sequence SMEYLVTAPGYLTPNADIKITAVVTNPSSAG. A disordered region spans residues 68-89; sequence SGIQPEQHSSGKSDVRRWRSRY. Positions 76-89 are enriched in basic and acidic residues; that stretch reads SSGKSDVRRWRSRY.

Its function is as follows. Has antifungal activity against C.albicans. Has antibacterial activity against the Gram-positive bacterium S.aureus and the Gram-negative bacterium E.coli. Lacks hemolytic activity against rabbit erythrocytes. This is Ixosin-B from Ixodes sinensis (Hard tick).